The primary structure comprises 376 residues: DNA-directed RNA polymerase subunit alpha (376 aa).

Positions 1 to 259 are alpha N-terminal domain (alpha-NTD); that stretch reads MSDCSQNLLY…KHFSIFEKMD (259 aa). The alpha C-terminal domain (alpha-CTD) stretch occupies residues 276–376; sequence KDDILHKLVL…DKIRSKNGKG (101 aa).

Belongs to the RNA polymerase alpha chain family. Homodimer. The RNAP catalytic core consists of 2 alpha, 1 beta, 1 beta' and 1 omega subunit. When a sigma factor is associated with the core the holoenzyme is formed, which can initiate transcription.

The enzyme catalyses RNA(n) + a ribonucleoside 5'-triphosphate = RNA(n+1) + diphosphate. Its function is as follows. DNA-dependent RNA polymerase catalyzes the transcription of DNA into RNA using the four ribonucleoside triphosphates as substrates. This is DNA-directed RNA polymerase subunit alpha from Chlamydia abortus (strain DSM 27085 / S26/3) (Chlamydophila abortus).